The sequence spans 152 residues: Protein-export protein SecB (152 aa).

The protein belongs to the SecB family. As to quaternary structure, homotetramer, a dimer of dimers. One homotetramer interacts with 1 SecA dimer.

It localises to the cytoplasm. One of the proteins required for the normal export of preproteins out of the cell cytoplasm. It is a molecular chaperone that binds to a subset of precursor proteins, maintaining them in a translocation-competent state. It also specifically binds to its receptor SecA. The chain is Protein-export protein SecB from Thiobacillus denitrificans (strain ATCC 25259 / T1).